The primary structure comprises 158 residues: Cyclic pyranopterin monophosphate synthase (158 aa).

Substrate is bound by residues leucine 76–histidine 78 and methionine 114–glutamate 115. Residue aspartate 129 is part of the active site.

It belongs to the MoaC family. In terms of assembly, homohexamer; trimer of dimers.

It carries out the reaction (8S)-3',8-cyclo-7,8-dihydroguanosine 5'-triphosphate = cyclic pyranopterin phosphate + diphosphate. It participates in cofactor biosynthesis; molybdopterin biosynthesis. In terms of biological role, catalyzes the conversion of (8S)-3',8-cyclo-7,8-dihydroguanosine 5'-triphosphate to cyclic pyranopterin monophosphate (cPMP). In Shewanella baltica (strain OS155 / ATCC BAA-1091), this protein is Cyclic pyranopterin monophosphate synthase.